We begin with the raw amino-acid sequence, 338 residues long: N-acetyl-gamma-glutamyl-phosphate reductase (338 aa).

Cys-148 is a catalytic residue.

The protein belongs to the NAGSA dehydrogenase family. Type 1 subfamily.

The protein resides in the cytoplasm. It catalyses the reaction N-acetyl-L-glutamate 5-semialdehyde + phosphate + NADP(+) = N-acetyl-L-glutamyl 5-phosphate + NADPH + H(+). It participates in amino-acid biosynthesis; L-arginine biosynthesis; N(2)-acetyl-L-ornithine from L-glutamate: step 3/4. Catalyzes the NADPH-dependent reduction of N-acetyl-5-glutamyl phosphate to yield N-acetyl-L-glutamate 5-semialdehyde. The chain is N-acetyl-gamma-glutamyl-phosphate reductase from Leptospira interrogans serogroup Icterohaemorrhagiae serovar Lai (strain 56601).